The following is a 410-amino-acid chain: Phosphoglycerate kinase (410 aa).

Residues 19-21, arginine 34, 57-60, arginine 114, and arginine 154 contribute to the substrate site; these read DLN and HQGK. Residues glutamate 332 and 358–361 contribute to the ATP site; that span reads GGHS.

Belongs to the phosphoglycerate kinase family. As to quaternary structure, homodimer.

It is found in the cytoplasm. It carries out the reaction (2R)-3-phosphoglycerate + ATP = (2R)-3-phospho-glyceroyl phosphate + ADP. It functions in the pathway carbohydrate degradation; glycolysis; pyruvate from D-glyceraldehyde 3-phosphate: step 2/5. This chain is Phosphoglycerate kinase (pgk), found in Pyrococcus horikoshii (strain ATCC 700860 / DSM 12428 / JCM 9974 / NBRC 100139 / OT-3).